We begin with the raw amino-acid sequence, 166 residues long: Ribosome maturation factor RimM (166 aa).

The region spanning 90 to 163 (EGQYFIKDII…KIVIKAVEEW (74 aa)) is the PRC barrel domain.

It belongs to the RimM family. Binds ribosomal protein uS19.

It is found in the cytoplasm. Functionally, an accessory protein needed during the final step in the assembly of 30S ribosomal subunit, possibly for assembly of the head region. Essential for efficient processing of 16S rRNA. May be needed both before and after RbfA during the maturation of 16S rRNA. It has affinity for free ribosomal 30S subunits but not for 70S ribosomes. The polypeptide is Ribosome maturation factor RimM (Clostridium acetobutylicum (strain ATCC 824 / DSM 792 / JCM 1419 / IAM 19013 / LMG 5710 / NBRC 13948 / NRRL B-527 / VKM B-1787 / 2291 / W)).